Reading from the N-terminus, the 668-residue chain is Chitin synthase 8 (668 aa).

Residues 1–26 (MTSRMPTSGHRTSSSSSERGNMSVQQ) show a composition bias toward polar residues. The interval 1–62 (MTSRMPTSGH…PAPLRPGWTL (62 aa)) is disordered. N-linked (GlcNAc...) asparagine glycosylation is found at asparagine 21, asparagine 98, and asparagine 101. 2 consecutive transmembrane segments (helical) span residues 136 to 156 (WSLI…GWKY) and 162 to 182 (FFLV…ICII). Residues asparagine 216 and asparagine 476 are each glycosylated (N-linked (GlcNAc...) asparagine). Transmembrane regions (helical) follow at residues 522 to 542 (WALG…IILI), 548 to 568 (LIAV…VELL), 583 to 603 (VFLG…CIGF), and 615 to 635 (YFAG…IILV).

The protein belongs to the chitin synthase family. Class VIII subfamily.

It localises to the cell membrane. It is found in the cell septum. The enzyme catalyses [(1-&gt;4)-N-acetyl-beta-D-glucosaminyl](n) + UDP-N-acetyl-alpha-D-glucosamine = [(1-&gt;4)-N-acetyl-beta-D-glucosaminyl](n+1) + UDP + H(+). Polymerizes chitin, a structural polymer of the cell wall and septum, by transferring the sugar moiety of UDP-GlcNAc to the non-reducing end of the growing chitin polymer. Participated in the development of cell wall and plays a critical role in fungal response to environmental stresses. Necessary for pathogenicity and deoxinivalenol (DON) production. The sequence is that of Chitin synthase 8 from Gibberella zeae (strain ATCC MYA-4620 / CBS 123657 / FGSC 9075 / NRRL 31084 / PH-1) (Wheat head blight fungus).